Reading from the N-terminus, the 443-residue chain is Exodeoxyribonuclease 7 large subunit (443 aa).

Belongs to the XseA family. In terms of assembly, heterooligomer composed of large and small subunits.

The protein localises to the cytoplasm. It catalyses the reaction Exonucleolytic cleavage in either 5'- to 3'- or 3'- to 5'-direction to yield nucleoside 5'-phosphates.. Functionally, bidirectionally degrades single-stranded DNA into large acid-insoluble oligonucleotides, which are then degraded further into small acid-soluble oligonucleotides. In Vibrio vulnificus (strain YJ016), this protein is Exodeoxyribonuclease 7 large subunit.